Here is a 151-residue protein sequence, read N- to C-terminus: Large ribosomal subunit protein uL13 (151 aa).

It belongs to the universal ribosomal protein uL13 family. As to quaternary structure, part of the 50S ribosomal subunit.

Its function is as follows. This protein is one of the early assembly proteins of the 50S ribosomal subunit, although it is not seen to bind rRNA by itself. It is important during the early stages of 50S assembly. The sequence is that of Large ribosomal subunit protein uL13 from Nostoc sp. (strain PCC 7120 / SAG 25.82 / UTEX 2576).